Here is a 67-residue protein sequence, read N- to C-terminus: Large ribosomal subunit protein bL35 (67 aa).

This sequence belongs to the bacterial ribosomal protein bL35 family.

This Rickettsia prowazekii (strain Madrid E) protein is Large ribosomal subunit protein bL35.